A 306-amino-acid chain; its full sequence is Ornithine carbamoyltransferase (306 aa).

Carbamoyl phosphate-binding positions include 53–56, Q80, R104, and 131–134; these read STRT and HPCQ. Residues N162, D219, and 223–224 each bind L-ornithine; that span reads SM. Carbamoyl phosphate contacts are provided by residues 259–260 and R287; that span reads CL.

This sequence belongs to the aspartate/ornithine carbamoyltransferase superfamily. OTCase family.

The protein resides in the cytoplasm. It catalyses the reaction carbamoyl phosphate + L-ornithine = L-citrulline + phosphate + H(+). It participates in amino-acid biosynthesis; L-arginine biosynthesis; L-arginine from L-ornithine and carbamoyl phosphate: step 1/3. Reversibly catalyzes the transfer of the carbamoyl group from carbamoyl phosphate (CP) to the N(epsilon) atom of ornithine (ORN) to produce L-citrulline. This chain is Ornithine carbamoyltransferase, found in Acinetobacter baumannii (strain ATCC 17978 / DSM 105126 / CIP 53.77 / LMG 1025 / NCDC KC755 / 5377).